A 236-amino-acid polypeptide reads, in one-letter code: Small ribosomal subunit protein uS2c (236 aa).

The protein belongs to the universal ribosomal protein uS2 family.

The protein resides in the plastid. It localises to the chloroplast. The protein is Small ribosomal subunit protein uS2c (rps2) of Daucus carota (Wild carrot).